We begin with the raw amino-acid sequence, 461 residues long: RNA-binding protein ZCH321 (461 aa).

C3H1-type zinc fingers lie at residues Leu-63–Leu-85 and Ala-181–Lys-208. The segment at Thr-224 to Val-243 is disordered. Residues Trp-446 to Tyr-451 carry the MKT1-binding motif motif.

In terms of biological role, RNA-binding protein involved in regulation of mRNA stability. Promotes mRNA stabilization by recruiting MKT1 and PBP1. Stabilizes transcripts encoding mitochondrial proteins. The chain is RNA-binding protein ZCH321 from Trypanosoma brucei brucei (strain 927/4 GUTat10.1).